Consider the following 1428-residue polypeptide: MGARASVLSGKKLDSWEKIRLRPGGNKKYRLKHLVWASRELEKFTLNPGLLETAEGCQQILGQLQPALQTGTEELRSLYNTVAVLYCVHQRIDVKDTKEALNKIEEMQNKNKQRTQQAAANTGSSQNYPIVQNAQGQPVHQALSPRTLNAWVKVVEDKAFSPEVIPMFSALSEGATPQDLNMMLNVVGGHQAAMQMLKDTINEEAAEWDRLHPVHAGPIPPGQMREPRGSDIAGTTSTVQEQIGWMTGNPPIPVGDIYRRWIILGLNKIVRMYSPVSILDIRQGPKEPFRDYVDRFFKTLRAEQATQDVKNWMTETLLVQNANPDCKSILRALGPGATLEEMMTACQGVGGPGHKARVLAEAMSQVQQTSIMMQRGNFRGPRRIKCFNCGKEGHLAKNCRAPRKKGCWKCGKEGHQMKDCTERQANFLRENLAFQQGEAREFSSEQTRANSPTSRNLWDGGKDDLPCETGAERQGTDSFSFPQITLWQRPLVTVKIGGQLIEALLDTGADDTVLEDINLPGKWKPKIIGGIGGFIKVRQYDQILIEICGKKTIGTVLVGPTPVNIIGRNMLTQIGCTLNFPISPIETVPVKLKPEMDGPKVKQWPLTEEKIKALTEICNEMEKEGKISKIGPENPYNTPVFAIKKKDSTKWRKLVDFRELNKRTQDFWEVQLGIPHTAGLKKKKSVTVLDVGDAYFSVPLDESFRKYTAFTIPSINNETPGVRYQYNVLPQGWKGSPSIFQSSMTKILEPFRSQHPDIVIYQYMDDLYVGSDLEIGQHRAKIEELRAHLLSWGFITPDKKHQKEPPFLWMGYELHPDKWTVQPIQLPEKDSWTVNDIQKLVGKLNWASQIYAGIKVKQLCKLLRGAKALTDIVTLTEEAELELAENREILKDPVHGVYYDPSKDLVAEIQKQGQDQWTYQIYQEPFKNLKTGKYARKRSAHTNDVKQLTEVVQKVSTESIVIWGKIPKFRLPIQKETWEAWWMEYWQATWIPEWEFVNTPPLVKLWYQLEKDPIAGAETFYVDGAANRETKLGKAGYVTDRGRQKVVSLTETTNQKTELHAIHLALQDSGSEVNIVTDSQYALGIIQAQPDRSESEIVNQIIEKLIEKEKVYLSWVPAHKGIGGNEQVDKLVSSGIRKVLFLDGIDKAQEDHEKYHCNWRAMASDFNLPPVVAKEIVASCNKCQLKGEAMHGQVDCSPGIWQLDCTHLEGKVILVAVHVASGYIEAEVIPAETGQETAYFILKLAGRWPVKVIHTDNGSNFTSAAVKAVCWWANIQQEFGIPYNPQSQGVVESMNKELKKIIGQVREQAEHLKTAVQMAVFIHNFKRKGGIGGYSAGERIIDIIATDIQTKELQKQISKIQNFRVYYRDSRDPIWKGPAKLLWKGEGAVVIQDNSDIKVVPRRKAKIIRDYGKQMAGDDCMAGRQDED.

Glycine 2 is lipidated: N-myristoyl glycine; by host. Positions 7–31 (VLSGKKLDSWEKIRLRPGGNKKYRL) are interaction with Gp41. The interval 8-43 (LSGKKLDSWEKIRLRPGGNKKYRLKHLVWASRELEK) is interaction with host CALM1. The tract at residues 12 to 19 (KLDSWEKI) is interaction with host AP3D1. The segment at 14-33 (DSWEKIRLRPGGNKKYRLKH) is interaction with membrane phosphatidylinositol 4,5-bisphosphate and RNA. Residues 16–22 (WEKIRLR) carry the Nuclear export signal motif. Positions 26-32 (NKKYRLK) match the Nuclear localization signal motif. Positions 73–77 (EELRS) are interaction with membrane phosphatidylinositol 4,5-bisphosphate. A disordered region spans residues 108–130 (QNKNKQRTQQAAANTGSSQNYPI). Polar residues predominate over residues 114-130 (RTQQAAANTGSSQNYPI). Phosphotyrosine; by host is present on tyrosine 128. The segment at 185 to 223 (NVVGGHQAAMQMLKDTINEEAAEWDRLHPVHAGPIPPGQ) is interaction with human PPIA/CYPA and NUP153. Positions 273–359 (YSPVSILDIR…GGPGHKARVL (87 aa)) are dimerization/Multimerization of capsid protein p24. 2 CCHC-type zinc fingers span residues 384–401 (IKCF…NCRA) and 405–422 (KGCW…DCTE). The segment at 438-475 (EAREFSSEQTRANSPTSRNLWDGGKDDLPCETGAERQG) is disordered. Positions 444–456 (SEQTRANSPTSRN) are enriched in polar residues. Residues 460–475 (GGKDDLPCETGAERQG) show a composition bias toward basic and acidic residues. Residues 482–486 (PQITL) are dimerization of protease. One can recognise a Peptidase A2 domain in the interval 501–570 (IEALLDTGAD…TPVNIIGRNM (70 aa)). Aspartate 506 (for protease activity; shared with dimeric partner) is an active-site residue. Dimerization of protease regions lie at residues 530–536 (GIGGFIK) and 569–581 (NMLT…LNFP). The Reverse transcriptase domain occupies 624-814 (EGKISKIGPE…PPFLWMGYEL (191 aa)). Residues aspartate 690, aspartate 765, and aspartate 766 each coordinate Mg(2+). The segment at 807–815 (FLWMGYELH) is RT 'primer grip'. A Tryptophan repeat motif motif is present at residues 978–994 (WEAWWMEYWQATWIPEW). In terms of domain architecture, RNase H type-1 spans 1014-1137 (IAGAETFYVD…VDKLVSSGIR (124 aa)). Aspartate 1023, glutamate 1058, aspartate 1078, and aspartate 1129 together coordinate Mg(2+). The Integrase-type zinc finger occupies 1143–1184 (DGIDKAQEDHEKYHCNWRAMASDFNLPPVVAKEIVASCNKCQ). Histidine 1152, histidine 1156, cysteine 1180, and cysteine 1183 together coordinate Zn(2+). Residues 1194 to 1344 (VDCSPGIWQL…SAGERIIDII (151 aa)) enclose the Integrase catalytic domain. Mg(2+) is bound by residues aspartate 1204, aspartate 1256, and glutamate 1292. A DNA-binding region (integrase-type) is located at residues 1363–1410 (FRVYYRDSRDPIWKGPAKLLWKGEGAVVIQDNSDIKVVPRRKAKIIRD).

Homotrimer; further assembles as hexamers of trimers. Interacts with gp41 (via C-terminus). Interacts with host CALM1; this interaction induces a conformational change in the Matrix protein, triggering exposure of the myristate group. Interacts with host AP3D1; this interaction allows the polyprotein trafficking to multivesicular bodies during virus assembly. Part of the pre-integration complex (PIC) which is composed of viral genome, matrix protein, Vpr and integrase. In terms of assembly, homodimer; the homodimer further multimerizes as homohexamers or homopentamers. Interacts with human PPIA/CYPA; This interaction stabilizes the capsid. Interacts with human NUP153. Interacts with host PDZD8; this interaction stabilizes the capsid. Interacts with monkey TRIM5; this interaction destabilizes the capsid. As to quaternary structure, homodimer, whose active site consists of two apposed aspartic acid residues. Heterodimer of p66 RT and p51 RT (RT p66/p51). Heterodimerization of RT is essential for DNA polymerase activity. The overall folding of the subdomains is similar in p66 RT and p51 RT but the spatial arrangements of the subdomains are dramatically different. In terms of assembly, homotetramer; may further associate as a homohexadecamer. Part of the pre-integration complex (PIC) which is composed of viral genome, matrix protein, Vpr and integrase. Interacts with human SMARCB1/INI1 and human PSIP1/LEDGF isoform 1. Interacts with human KPNA3; this interaction might play a role in nuclear import of the pre-integration complex. Interacts with human NUP153; this interaction might play a role in nuclear import of the pre-integration complex. It depends on Mg(2+) as a cofactor. In terms of processing, specific enzymatic cleavages by the viral protease yield mature proteins. The protease is released by autocatalytic cleavage. The polyprotein is cleaved during and after budding, this process is termed maturation. Proteolytic cleavage of p66 RT removes the RNase H domain to yield the p51 RT subunit. Nucleocapsid protein p7 might be further cleaved after virus entry. Post-translationally, tyrosine phosphorylated presumably in the virion by a host kinase. Phosphorylation is apparently not a major regulator of membrane association. Phosphorylated possibly by host MAPK1; this phosphorylation is necessary for Pin1-mediated virion uncoating. In terms of processing, methylated by host PRMT6, impairing its function by reducing RNA annealing and the initiation of reverse transcription.

It is found in the host cell membrane. The protein localises to the host endosome. The protein resides in the host multivesicular body. It localises to the virion membrane. Its subcellular location is the host nucleus. It is found in the host cytoplasm. The protein localises to the virion. It catalyses the reaction Specific for a P1 residue that is hydrophobic, and P1' variable, but often Pro.. The enzyme catalyses Endohydrolysis of RNA in RNA/DNA hybrids. Three different cleavage modes: 1. sequence-specific internal cleavage of RNA. Human immunodeficiency virus type 1 and Moloney murine leukemia virus enzymes prefer to cleave the RNA strand one nucleotide away from the RNA-DNA junction. 2. RNA 5'-end directed cleavage 13-19 nucleotides from the RNA end. 3. DNA 3'-end directed cleavage 15-20 nucleotides away from the primer terminus.. The catalysed reaction is 3'-end directed exonucleolytic cleavage of viral RNA-DNA hybrid.. It carries out the reaction DNA(n) + a 2'-deoxyribonucleoside 5'-triphosphate = DNA(n+1) + diphosphate. With respect to regulation, protease: The viral protease is inhibited by many synthetic protease inhibitors (PIs), such as amprenavir, atazanavir, indinavir, loprinavir, nelfinavir, ritonavir and saquinavir. Use of protease inhibitors in tritherapy regimens permit more ambitious therapeutic strategies. Reverse transcriptase/ribonuclease H: RT can be inhibited either by nucleoside RT inhibitors (NRTIs) or by non nucleoside RT inhibitors (NNRTIs). NRTIs act as chain terminators, whereas NNRTIs inhibit DNA polymerization by binding a small hydrophobic pocket near the RT active site and inducing an allosteric change in this region. Classical NRTIs are abacavir, adefovir (PMEA), didanosine (ddI), lamivudine (3TC), stavudine (d4T), tenofovir (PMPA), zalcitabine (ddC), and zidovudine (AZT). Classical NNRTIs are atevirdine (BHAP U-87201E), delavirdine, efavirenz (DMP-266), emivirine (I-EBU), and nevirapine (BI-RG-587). The tritherapies used as a basic effective treatment of AIDS associate two NRTIs and one NNRTI. Mediates, with Gag polyprotein, the essential events in virion assembly, including binding the plasma membrane, making the protein-protein interactions necessary to create spherical particles, recruiting the viral Env proteins, and packaging the genomic RNA via direct interactions with the RNA packaging sequence (Psi). Gag-Pol polyprotein may regulate its own translation, by the binding genomic RNA in the 5'-UTR. At low concentration, the polyprotein would promote translation, whereas at high concentration, the polyprotein would encapsidate genomic RNA and then shut off translation. Functionally, targets the polyprotein to the plasma membrane via a multipartite membrane-binding signal, that includes its myristoylated N-terminus. Matrix protein is part of the pre-integration complex. Implicated in the release from host cell mediated by Vpu. Binds to RNA. In terms of biological role, forms the conical core that encapsulates the genomic RNA-nucleocapsid complex in the virion. Most core are conical, with only 7% tubular. The core is constituted by capsid protein hexamer subunits. The core is disassembled soon after virion entry. Host restriction factors such as TRIM5-alpha or TRIMCyp bind retroviral capsids and cause premature capsid disassembly, leading to blocks in reverse transcription. Capsid restriction by TRIM5 is one of the factors which restricts HIV-1 to the human species. Host PIN1 apparently facilitates the virion uncoating. On the other hand, interactions with PDZD8 or CYPA stabilize the capsid. Its function is as follows. Encapsulates and protects viral dimeric unspliced genomic RNA (gRNA). Binds these RNAs through its zinc fingers. Acts as a nucleic acid chaperone which is involved in rearangement of nucleic acid secondary structure during gRNA retrotranscription. Also facilitates template switch leading to recombination. As part of the polyprotein, participates in gRNA dimerization, packaging, tRNA incorporation and virion assembly. Aspartyl protease that mediates proteolytic cleavages of Gag and Gag-Pol polyproteins during or shortly after the release of the virion from the plasma membrane. Cleavages take place as an ordered, step-wise cascade to yield mature proteins. This process is called maturation. Displays maximal activity during the budding process just prior to particle release from the cell. Also cleaves Nef and Vif, probably concomitantly with viral structural proteins on maturation of virus particles. Hydrolyzes host EIF4GI and PABP1 in order to shut off the capped cellular mRNA translation. The resulting inhibition of cellular protein synthesis serves to ensure maximal viral gene expression and to evade host immune response. Also mediates cleavage of host YTHDF3. Mediates cleavage of host CARD8, thereby activating the CARD8 inflammasome, leading to the clearance of latent HIV-1 in patient CD4(+) T-cells after viral reactivation; in contrast, HIV-1 can evade CARD8-sensing when its protease remains inactive in infected cells prior to viral budding. Functionally, multifunctional enzyme that converts the viral RNA genome into dsDNA in the cytoplasm, shortly after virus entry into the cell. This enzyme displays a DNA polymerase activity that can copy either DNA or RNA templates, and a ribonuclease H (RNase H) activity that cleaves the RNA strand of RNA-DNA heteroduplexes in a partially processive 3' to 5' endonucleasic mode. Conversion of viral genomic RNA into dsDNA requires many steps. A tRNA(3)-Lys binds to the primer-binding site (PBS) situated at the 5'-end of the viral RNA. RT uses the 3' end of the tRNA primer to perform a short round of RNA-dependent minus-strand DNA synthesis. The reading proceeds through the U5 region and ends after the repeated (R) region which is present at both ends of viral RNA. The portion of the RNA-DNA heteroduplex is digested by the RNase H, resulting in a ssDNA product attached to the tRNA primer. This ssDNA/tRNA hybridizes with the identical R region situated at the 3' end of viral RNA. This template exchange, known as minus-strand DNA strong stop transfer, can be either intra- or intermolecular. RT uses the 3' end of this newly synthesized short ssDNA to perform the RNA-dependent minus-strand DNA synthesis of the whole template. RNase H digests the RNA template except for two polypurine tracts (PPTs) situated at the 5'-end and near the center of the genome. It is not clear if both polymerase and RNase H activities are simultaneous. RNase H probably can proceed both in a polymerase-dependent (RNA cut into small fragments by the same RT performing DNA synthesis) and a polymerase-independent mode (cleavage of remaining RNA fragments by free RTs). Secondly, RT performs DNA-directed plus-strand DNA synthesis using the PPTs that have not been removed by RNase H as primers. PPTs and tRNA primers are then removed by RNase H. The 3' and 5' ssDNA PBS regions hybridize to form a circular dsDNA intermediate. Strand displacement synthesis by RT to the PBS and PPT ends produces a blunt ended, linear dsDNA copy of the viral genome that includes long terminal repeats (LTRs) at both ends. In terms of biological role, catalyzes viral DNA integration into the host chromosome, by performing a series of DNA cutting and joining reactions. This enzyme activity takes place after virion entry into a cell and reverse transcription of the RNA genome in dsDNA. The first step in the integration process is 3' processing. This step requires a complex comprising the viral genome, matrix protein, Vpr and integrase. This complex is called the pre-integration complex (PIC). The integrase protein removes 2 nucleotides from each 3' end of the viral DNA, leaving recessed CA OH's at the 3' ends. In the second step, the PIC enters cell nucleus. This process is mediated through integrase and Vpr proteins, and allows the virus to infect a non dividing cell. This ability to enter the nucleus is specific of lentiviruses, other retroviruses cannot and rely on cell division to access cell chromosomes. In the third step, termed strand transfer, the integrase protein joins the previously processed 3' ends to the 5' ends of strands of target cellular DNA at the site of integration. The 5'-ends are produced by integrase-catalyzed staggered cuts, 5 bp apart. A Y-shaped, gapped, recombination intermediate results, with the 5'-ends of the viral DNA strands and the 3' ends of target DNA strands remaining unjoined, flanking a gap of 5 bp. The last step is viral DNA integration into host chromosome. This involves host DNA repair synthesis in which the 5 bp gaps between the unjoined strands are filled in and then ligated. Since this process occurs at both cuts flanking the HIV genome, a 5 bp duplication of host DNA is produced at the ends of HIV-1 integration. Alternatively, Integrase may catalyze the excision of viral DNA just after strand transfer, this is termed disintegration. This chain is Gag-Pol polyprotein (gag-pol), found in Human immunodeficiency virus type 1 group M subtype A (isolate U455) (HIV-1).